A 270-amino-acid chain; its full sequence is Sorting nexin-11 (270 aa).

The 117-residue stretch at 16–132 (VITVRVQDPR…HLFLQSQLSV (117 aa)) folds into the PX domain. 3 residues coordinate a 1,2-diacyl-sn-glycero-3-phospho-(1D-myo-inositol-3-phosphate): Arg-59, Lys-85, and Arg-99. The tract at residues 135–139 (IEACV) is important for membrane trafficking. A compositionally biased stretch (basic and acidic residues) spans 168–177 (SSSHLAKGDQ). Residues 168-203 (SSSHLAKGDQPKSCCFLPRSGRRSSPSPPPSEEKDH) form a disordered region.

This sequence belongs to the sorting nexin family. In terms of assembly, monomer. Interacts with TRPV3; this interaction promotes TRPV3 trafficking from the cell membrane to lysosome for degradation.

Its subcellular location is the cell membrane. The protein localises to the endosome. The protein resides in the cytoplasm. Phosphoinositide-binding protein involved in protein sorting and membrane trafficking in endosomes. Regulates the levels of TRPV3 by promoting its trafficking from the cell membrane to lysosome for degradation. This chain is Sorting nexin-11 (SNX11), found in Homo sapiens (Human).